The sequence spans 441 residues: Peroxisome proliferator-activated receptor delta (441 aa).

Positions M1–E22 are enriched in acidic residues. Residues M1 to L54 form a disordered region. The segment covering L37–L54 has biased composition (low complexity). Residues N71–F145 constitute a DNA-binding region (nuclear receptor). 2 consecutive NR C4-type zinc fingers follow at residues C74 to C94 and C111 to C133. Residues F211–D439 enclose the NR LBD domain.

It belongs to the nuclear hormone receptor family. NR1 subfamily. As to quaternary structure, heterodimer with the retinoid X receptor. Interacts (via domain NR LBD) with CRY1 and CRY2 in a ligand-dependent manner. 'Lys-48'-linked polyubiquitinated; leading to proteasomal degradation. Deubiquitinated and stabilized by OTUD3. In terms of tissue distribution, ubiquitous with maximal levels in placenta and skeletal muscle.

The protein localises to the nucleus. In terms of biological role, ligand-activated transcription factor key mediator of energy metabolism in adipose tissues. Receptor that binds peroxisome proliferators such as hypolipidemic drugs and fatty acids. Has a preference for poly-unsaturated fatty acids, such as gamma-linoleic acid and eicosapentanoic acid. Once activated by a ligand, the receptor binds to promoter elements of target genes. Regulates the peroxisomal beta-oxidation pathway of fatty acids. Functions as transcription activator for the acyl-CoA oxidase gene. Decreases expression of NPC1L1 once activated by a ligand. The protein is Peroxisome proliferator-activated receptor delta of Homo sapiens (Human).